We begin with the raw amino-acid sequence, 175 residues long: ATP synthase subunit delta (175 aa).

It belongs to the ATPase delta chain family. As to quaternary structure, F-type ATPases have 2 components, F(1) - the catalytic core - and F(0) - the membrane proton channel. F(1) has five subunits: alpha(3), beta(3), gamma(1), delta(1), epsilon(1). F(0) has three main subunits: a(1), b(2) and c(10-14). The alpha and beta chains form an alternating ring which encloses part of the gamma chain. F(1) is attached to F(0) by a central stalk formed by the gamma and epsilon chains, while a peripheral stalk is formed by the delta and b chains.

Its subcellular location is the cell inner membrane. In terms of biological role, f(1)F(0) ATP synthase produces ATP from ADP in the presence of a proton or sodium gradient. F-type ATPases consist of two structural domains, F(1) containing the extramembraneous catalytic core and F(0) containing the membrane proton channel, linked together by a central stalk and a peripheral stalk. During catalysis, ATP synthesis in the catalytic domain of F(1) is coupled via a rotary mechanism of the central stalk subunits to proton translocation. This protein is part of the stalk that links CF(0) to CF(1). It either transmits conformational changes from CF(0) to CF(1) or is implicated in proton conduction. This chain is ATP synthase subunit delta, found in Xanthomonas euvesicatoria pv. vesicatoria (strain 85-10) (Xanthomonas campestris pv. vesicatoria).